The primary structure comprises 494 residues: Cobyric acid synthase (494 aa).

Residues 248-445 enclose the GATase cobBQ-type domain; sequence ELEIAVLKLP…LHGIFDNGPW (198 aa). The Nucleophile role is filled by C329. H437 is a catalytic residue.

This sequence belongs to the CobB/CobQ family. CobQ subfamily.

The protein operates within cofactor biosynthesis; adenosylcobalamin biosynthesis. Functionally, catalyzes amidations at positions B, D, E, and G on adenosylcobyrinic A,C-diamide. NH(2) groups are provided by glutamine, and one molecule of ATP is hydrogenolyzed for each amidation. The sequence is that of Cobyric acid synthase from Synechococcus sp. (strain WH7803).